Reading from the N-terminus, the 185-residue chain is Translation initiation factor IF-3 (185 aa).

The protein belongs to the IF-3 family. As to quaternary structure, monomer.

It localises to the cytoplasm. IF-3 binds to the 30S ribosomal subunit and shifts the equilibrium between 70S ribosomes and their 50S and 30S subunits in favor of the free subunits, thus enhancing the availability of 30S subunits on which protein synthesis initiation begins. This chain is Translation initiation factor IF-3, found in Streptococcus pneumoniae (strain Hungary19A-6).